A 939-amino-acid polypeptide reads, in one-letter code: Valine--tRNA ligase (939 aa).

The 'HIGH' region signature appears at 47–57; sequence PNVTGILHMGH. Residues 563–567 carry the 'KMSKS' region motif; sequence KLSKS. Lysine 566 serves as a coordination point for ATP. Positions 874 to 939 form a coiled coil; sequence EHLAKERVRL…QSILDKLASL (66 aa).

The protein belongs to the class-I aminoacyl-tRNA synthetase family. ValS type 1 subfamily. In terms of assembly, monomer.

The protein resides in the cytoplasm. The enzyme catalyses tRNA(Val) + L-valine + ATP = L-valyl-tRNA(Val) + AMP + diphosphate. Its function is as follows. Catalyzes the attachment of valine to tRNA(Val). As ValRS can inadvertently accommodate and process structurally similar amino acids such as threonine, to avoid such errors, it has a 'posttransfer' editing activity that hydrolyzes mischarged Thr-tRNA(Val) in a tRNA-dependent manner. This Chlamydia trachomatis serovar L2b (strain UCH-1/proctitis) protein is Valine--tRNA ligase.